A 278-amino-acid chain; its full sequence is Probable endonuclease 4 (278 aa).

Residues His-69, His-109, Glu-145, Asp-179, His-182, His-214, Asp-227, His-229, and Glu-259 each coordinate Zn(2+).

Belongs to the AP endonuclease 2 family. Zn(2+) is required as a cofactor.

It carries out the reaction Endonucleolytic cleavage to 5'-phosphooligonucleotide end-products.. Endonuclease IV plays a role in DNA repair. It cleaves phosphodiester bonds at apurinic or apyrimidinic (AP) sites, generating a 3'-hydroxyl group and a 5'-terminal sugar phosphate. The protein is Probable endonuclease 4 of Phocaeicola vulgatus (strain ATCC 8482 / DSM 1447 / JCM 5826 / CCUG 4940 / NBRC 14291 / NCTC 11154) (Bacteroides vulgatus).